A 362-amino-acid polypeptide reads, in one-letter code: Small ribosomal subunit protein uS4m (362 aa).

The 75-residue stretch at 105 to 179 folds into the S4 RNA-binding domain; the sequence is TRFDVILLRL…FYKEILVEKI (75 aa).

It belongs to the universal ribosomal protein uS4 family. In terms of assembly, component of the mitochondrial ribosome small subunit.

Its subcellular location is the mitochondrion. This Arabidopsis thaliana (Mouse-ear cress) protein is Small ribosomal subunit protein uS4m (RPS4).